A 405-amino-acid polypeptide reads, in one-letter code: Elongation factor Tu (405 aa).

The tr-type G domain maps to Lys-10–Glu-213. Positions Gly-19–Ser-26 are G1. Gly-19–Ser-26 is a GTP binding site. Ser-26 provides a ligand contact to Mg(2+). The tract at residues Gly-64 to Asn-68 is G2. Residues Asp-85–Gly-88 form a G3 region. Residues Asp-85–His-89 and Asn-140–Asp-143 each bind GTP. The G4 stretch occupies residues Asn-140–Asp-143. Residues Ser-178–Leu-180 form a G5 region.

It belongs to the TRAFAC class translation factor GTPase superfamily. Classic translation factor GTPase family. EF-Tu/EF-1A subfamily. Monomer.

It is found in the cytoplasm. It catalyses the reaction GTP + H2O = GDP + phosphate + H(+). Its function is as follows. GTP hydrolase that promotes the GTP-dependent binding of aminoacyl-tRNA to the A-site of ribosomes during protein biosynthesis. This Aquifex pyrophilus protein is Elongation factor Tu.